A 607-amino-acid polypeptide reads, in one-letter code: NADH-ubiquinone oxidoreductase chain 5 (607 aa).

16 helical membrane-spanning segments follow: residues 3-23 (IFTTSILLIFILLLSPILISM), 35-55 (YTTTSIKFSFIISLLPLLMFF), 84-104 (FFSILFTSVALFVTWSIMQFS), 117-137 (FIKYLTLFLITMLILTSANNM), 140-160 (LFIGWEGVGIMSFLLIGWWYG), 171-191 (AILYNRIGDIGFILAMVWFSL), 210-230 (LIPLMGLLIAATGKSAQFGLH), 241-261 (TPVSALLHSSTMVVAGIFLLV), 272-292 (FILTTMLCLGALTTLFTAICA), 301-320 (IIAFSTSSQLGLMMVTLGMN), 324-344 (LAFLHICTHAFFKAMLFMCSG), 365-385 (IMPFTSSCLVIGSLALTGMPF), 405-427 (NAWALLITLIATSMTAMYSMRII), 457-477 (LAFGSIFAGFVISYNIPPTSI), 482-502 (MPWFLKTTALIISVLGFLIAL), and 586-606 (LYFMSFLINIILIIILYSINL).

This sequence belongs to the complex I subunit 5 family. Core subunit of respiratory chain NADH dehydrogenase (Complex I) which is composed of 45 different subunits.

Its subcellular location is the mitochondrion inner membrane. The enzyme catalyses a ubiquinone + NADH + 5 H(+)(in) = a ubiquinol + NAD(+) + 4 H(+)(out). Functionally, core subunit of the mitochondrial membrane respiratory chain NADH dehydrogenase (Complex I) which catalyzes electron transfer from NADH through the respiratory chain, using ubiquinone as an electron acceptor. Essential for the catalytic activity and assembly of complex I. The chain is NADH-ubiquinone oxidoreductase chain 5 (Mtnd5) from Mus musculus (Mouse).